The sequence spans 764 residues: Reticulon-1 (764 aa).

Disordered stretches follow at residues 1 to 37 (MAANPEVFSGRLEGNVAAARRPGSAQEEEGEAAGGAL), 115 to 147 (PDIKEFSGVGPRSPKEIPTFDSRGLLSSDSGIE), 247 to 400 (LYNS…SEIE), and 455 to 475 (ESCDGSSASEESPKRDQDSPM). Polar residues predominate over residues 261–282 (VTISFTGMETTLQTEYPENQQG). The segment covering 328–337 (EEQRKYKISE) has biased composition (basic and acidic residues). A Reticulon domain is found at 578–764 (AIELLYWRDI…AKIPGTKQKE (187 aa)). Transmembrane regions (helical) follow at residues 607 to 627 (FSVVSVIAYLALAALSATISF) and 696 to 716 (VLMWLLTYVGALFNGLTLLIM).

It is found in the endoplasmic reticulum membrane. The protein localises to the nucleus. In terms of biological role, inhibits amyloid precursor protein processing, probably by blocking BACE1 activity. The polypeptide is Reticulon-1 (Xenopus tropicalis (Western clawed frog)).